We begin with the raw amino-acid sequence, 104 residues long: ATP-dependent Clp protease adapter protein ClpS (104 aa).

The disordered stretch occupies residues 1–20 (MSPDPHEDLGDVLTEPTQKT).

This sequence belongs to the ClpS family. In terms of assembly, binds to the N-terminal domain of the chaperone ClpA.

Functionally, involved in the modulation of the specificity of the ClpAP-mediated ATP-dependent protein degradation. The protein is ATP-dependent Clp protease adapter protein ClpS of Desulfatibacillum aliphaticivorans.